The chain runs to 374 residues: Nuclear hormone receptor family member nhr-57 (374 aa).

The nuclear receptor DNA-binding region spans arginine 7 to alanine 84. 2 NR C4-type zinc fingers span residues cysteine 10–cysteine 30 and cysteine 48–cysteine 67. An NR LBD domain is found at glutamine 124–glutamine 374.

The protein belongs to the nuclear hormone receptor family.

Its subcellular location is the nucleus. Its function is as follows. Orphan nuclear receptor. The sequence is that of Nuclear hormone receptor family member nhr-57 (nhr-57) from Caenorhabditis elegans.